The chain runs to 175 residues: NADH-quinone oxidoreductase subunit I 1 (175 aa).

2 consecutive 4Fe-4S ferredoxin-type domains span residues Leu44–Ala74 and Arg90–Asp119. [4Fe-4S] cluster-binding residues include Cys54, Cys57, Cys60, Cys64, Cys99, Cys102, Cys105, and Cys109.

It belongs to the complex I 23 kDa subunit family. In terms of assembly, NDH-1 is composed of 14 different subunits. Subunits NuoA, H, J, K, L, M, N constitute the membrane sector of the complex. [4Fe-4S] cluster serves as cofactor.

The protein resides in the cell membrane. It catalyses the reaction a quinone + NADH + 5 H(+)(in) = a quinol + NAD(+) + 4 H(+)(out). NDH-1 shuttles electrons from NADH, via FMN and iron-sulfur (Fe-S) centers, to quinones in the respiratory chain. The immediate electron acceptor for the enzyme in this species is believed to be menaquinone. Couples the redox reaction to proton translocation (for every two electrons transferred, four hydrogen ions are translocated across the cytoplasmic membrane), and thus conserves the redox energy in a proton gradient. This Mycolicibacterium paratuberculosis (strain ATCC BAA-968 / K-10) (Mycobacterium paratuberculosis) protein is NADH-quinone oxidoreductase subunit I 1.